Reading from the N-terminus, the 341-residue chain is Glycerol-3-phosphate dehydrogenase [NAD(P)+] (341 aa).

Positions 14, 15, 35, and 108 each coordinate NADPH. 2 residues coordinate sn-glycerol 3-phosphate: Lys-108 and Gly-136. Ala-140 is an NADPH binding site. The sn-glycerol 3-phosphate site is built by Lys-191, Asp-244, Ser-254, Arg-255, and Asn-256. The Proton acceptor role is filled by Lys-191. Residue Arg-255 participates in NADPH binding. NADPH-binding residues include Val-279 and Glu-281.

This sequence belongs to the NAD-dependent glycerol-3-phosphate dehydrogenase family.

It is found in the cytoplasm. The enzyme catalyses sn-glycerol 3-phosphate + NAD(+) = dihydroxyacetone phosphate + NADH + H(+). It carries out the reaction sn-glycerol 3-phosphate + NADP(+) = dihydroxyacetone phosphate + NADPH + H(+). It functions in the pathway membrane lipid metabolism; glycerophospholipid metabolism. Functionally, catalyzes the reduction of the glycolytic intermediate dihydroxyacetone phosphate (DHAP) to sn-glycerol 3-phosphate (G3P), the key precursor for phospholipid synthesis. The protein is Glycerol-3-phosphate dehydrogenase [NAD(P)+] of Pseudomonas fluorescens (strain SBW25).